Reading from the N-terminus, the 378-residue chain is Squalene methyltransferase 2 (378 aa).

Residues 17–37 (LLTVKGATGLIAALILGYIII) form a helical membrane-spanning segment.

This sequence belongs to the class I-like SAM-binding methyltransferase superfamily. Erg6/SMT family.

Its subcellular location is the microsome membrane. It catalyses the reaction squalene + 2 S-adenosyl-L-methionine = 3,22-dimethyl-1,2,23,24-tetradehydro-2,3,22,23-tetrahydrosqualene + 2 S-adenosyl-L-homocysteine + 2 H(+). Functionally, converts squalene to mono- and dimethyl derivatives, but not to tri- and tetramethylated products. Unable to methylate cycloartenol, zymosterol or lanosterol. Methylates both C-3 and C22 positions, but only C-3 position in monomethylated products. Produces mainly monomethylated squalene and only 20% of dimethylated squalene. In Botryococcus braunii (Green alga), this protein is Squalene methyltransferase 2 (TMT-2).